Consider the following 435-residue polypeptide: Elongation factor 1-alpha (435 aa).

Positions lysine 4 to lysine 227 constitute a tr-type G domain. The G1 stretch occupies residues glycine 13 to serine 20. Residue glycine 13–serine 20 participates in GTP binding. Serine 20 provides a ligand contact to Mg(2+). Positions glycine 69 to asparagine 73 are G2. Residues aspartate 90–glycine 93 form a G3 region. GTP is bound by residues aspartate 90–histidine 94 and asparagine 152–aspartate 155. A G4 region spans residues asparagine 152–aspartate 155. The tract at residues valine 193–proline 195 is G5.

Belongs to the TRAFAC class translation factor GTPase superfamily. Classic translation factor GTPase family. EF-Tu/EF-1A subfamily.

The protein resides in the cytoplasm. The catalysed reaction is GTP + H2O = GDP + phosphate + H(+). Its function is as follows. GTP hydrolase that promotes the GTP-dependent binding of aminoacyl-tRNA to the A-site of ribosomes during protein biosynthesis. This Saccharolobus solfataricus (strain ATCC 35092 / DSM 1617 / JCM 11322 / P2) (Sulfolobus solfataricus) protein is Elongation factor 1-alpha.